The sequence spans 427 residues: MGMTIAEKIFAAHLVDEPFHGTRVLKLDVVMCHEITTPIAIADLIARGKDRVFDTSRIKAVIDHVTPSKDSKTATQAKMLRDWARRHNIKDFFDIGANGVCHALFPEKGFIRPGYTVIMGDSHTCTHGAFGAFAAGVGTTDLEVGILKGVCAFREPKTIRINLNGKLPKGVYAKDAILHVIGRLGVNGATDRVIEFRGAVVDAMTMESRMTLCNMAIEAGGTSGICMPDSVTVDYLWPFISEDYASKEAALVEFKKWWSDEDAVYERVLDLDISGLEPVVTFGYKPDQVKTITEMAGTPVDQVYLGSCTNGRLEDLRVAAEILKGKKIAPTVRAILSPATPKVYSDALHEGLIDIFMEAGFCVTNPTCGACLGMSNGVLAEGEVCASTTNRNFMGRMGKGGMVHLMSPATSAATAIEGKMADPRKYL.

Positions 308, 368, and 371 each coordinate [4Fe-4S] cluster.

This sequence belongs to the aconitase/IPM isomerase family. LeuC type 2 subfamily. As to quaternary structure, heterodimer of LeuC and LeuD. [4Fe-4S] cluster serves as cofactor.

It carries out the reaction (2R,3S)-3-isopropylmalate = (2S)-2-isopropylmalate. It participates in amino-acid biosynthesis; L-leucine biosynthesis; L-leucine from 3-methyl-2-oxobutanoate: step 2/4. In terms of biological role, catalyzes the isomerization between 2-isopropylmalate and 3-isopropylmalate, via the formation of 2-isopropylmaleate. This Geotalea uraniireducens (strain Rf4) (Geobacter uraniireducens) protein is 3-isopropylmalate dehydratase large subunit.